Here is a 410-residue protein sequence, read N- to C-terminus: LIMR family protein SELMODRAFT_432208 (410 aa).

Transmembrane regions (helical) follow at residues 30–50, 67–87, 129–149, 156–176, and 179–199; these read LWWA…IFFY, LWVV…YAVI, VTLM…LTTL, ICLD…NTII, and ILFM…LIFA. Positions 245 to 274 form a coiled coil; the sequence is RMFRKNVKKVQQELVFLEDDVEALNEAFPQ. Transmembrane regions (helical) follow at residues 288–308 and 330–350; these read LVFG…IIVF and GGLL…MSVI. Low complexity predominate over residues 389–400; that stretch reads PSSAMDSSSWSA. Residues 389 to 410 are disordered; the sequence is PSSAMDSSSWSADRPCRPWPWP.

This sequence belongs to the LIMR family.

It localises to the membrane. This is LIMR family protein SELMODRAFT_432208 from Selaginella moellendorffii (Spikemoss).